A 432-amino-acid polypeptide reads, in one-letter code: Serine/threonine-protein phosphatase 2A activator 1 (432 aa).

Residues 322–432 form a disordered region; that stretch reads PYSKVEDEEP…MAPTKAPWAK (111 aa). A compositionally biased stretch (basic and acidic residues) spans 366 to 389; the sequence is TVERLARRDGQRAAREKEEREDRA. A compositionally biased stretch (low complexity) spans 396 to 412; it reads TTGAPGATALPPTRAPG.

It belongs to the PTPA-type PPIase family.

Its subcellular location is the cytoplasm. The protein localises to the nucleus. The enzyme catalyses [protein]-peptidylproline (omega=180) = [protein]-peptidylproline (omega=0). In terms of biological role, PPIases accelerate the folding of proteins. It catalyzes the cis-trans isomerization of proline imidic peptide bonds in oligopeptides. Acts as a regulatory subunit for PP2A-like phosphatases modulating their activity or substrate specificity, probably by inducing a conformational change in the catalytic subunit, a direct target of the PPIase. Can reactivate inactive phosphatase PP2A-phosphatase methylesterase complexes (PP2Ai) in presence of ATP and Mg(2+) by dissociating the inactive form from the complex. The polypeptide is Serine/threonine-protein phosphatase 2A activator 1 (RRD1) (Yarrowia lipolytica (strain CLIB 122 / E 150) (Yeast)).